Reading from the N-terminus, the 257-residue chain is Receptor expression-enhancing protein 4 (257 aa).

2 helical membrane-spanning segments follow: residues 1–21 (MVSW…YPAY) and 42–62 (WIVF…ISWF). A phosphoserine mark is found at Ser152 and Ser194. Positions 177–257 (VPRRRPPIGY…KKAMPSDMDS (81 aa)) are disordered. Thr196 carries the post-translational modification Phosphothreonine. Phosphoserine occurs at positions 202 and 253.

This sequence belongs to the DP1 family.

The protein localises to the endoplasmic reticulum membrane. Functionally, microtubule-binding protein required to ensure proper cell division and nuclear envelope reassembly by sequestering the endoplasmic reticulum away from chromosomes during mitosis. Probably acts by clearing the endoplasmic reticulum membrane from metaphase chromosomes. In Mus musculus (Mouse), this protein is Receptor expression-enhancing protein 4 (Reep4).